The chain runs to 358 residues: MFDQLDIVEERYEQLNELLSDPDVVNDADKLRKYSKEQADLQKTVDVYRSYKTKKEELQDIEDMLNETSDKEEVEMLKEESSALKTELPDMEEELKILLIPKDPNDDKDVIVEIRAAAGGDEAAIFAGDLMRMYSKYAEANGFKTEIVEASESDHGGYKEVSFSVSGTGAYSKLKFENGAHRVQRVPETESGGRIHTSTATVAVLPEAEDVEIEIRNEDLKIDTYRSSGAGGQHVNTTDSAVRITHLPTGVIATSSEKSQIQNREKAMKVLKARLYDMKLQEEQQKYASQRKSAVGTGDRSERIRTYNYPQSRVTDHRIGLTLQKLNQIMEGNLDEIVEALTLSEQTEKLKELNNGEL.

Residue glutamine 233 is modified to N5-methylglutamine.

Belongs to the prokaryotic/mitochondrial release factor family. Post-translationally, methylated by PrmC. Methylation increases the termination efficiency of RF1.

The protein localises to the cytoplasm. Functionally, peptide chain release factor 1 directs the termination of translation in response to the peptide chain termination codons UAG and UAA. In Staphylococcus epidermidis (strain ATCC 35984 / DSM 28319 / BCRC 17069 / CCUG 31568 / BM 3577 / RP62A), this protein is Peptide chain release factor 1.